The primary structure comprises 54 residues: SPbeta prophage-derived uncharacterized protein YoqE (54 aa).

This Bacillus subtilis (strain 168) protein is SPbeta prophage-derived uncharacterized protein YoqE (yoqE).